The sequence spans 120 residues: Putative monooxygenase GME11364 (120 aa).

In terms of domain architecture, ABM spans Val9 to Leu99.

This sequence belongs to the LsrG family.

The protein operates within secondary metabolite biosynthesis. In terms of biological role, putative monooxygenase; part of the gene cluster that mediates the biosynthesis of dibenzodioxocinones such as pestalotiollide B, a novel class of inhibitors against cholesterol ester transfer protein (CEPT). The biosynthesis initiates from condensation of acetate and malonate units catalyzed by the non-reducing PKS pks8/GME11356. Pks8/GME11356 lacks a thioesterase (TE) domain, which is important to the cyclizing of the third ring of atrochrysone carboxylic acid, and the esterase GME11355 might play the role of TE and catalyzes the cyclization reaction of the C ring. The lactamase-like protein GME11357 (or other beta-lactamases in Pestalotiopsis microspora) probably hydrolyzes the thioester bond between the ACP of pks8/GME11356 and the intermediate to release atrochrysone carboxylic acid, which is spontaneously dehydrates to form endocrocin anthrone. Endocrocin anthrone is further converted to emodin via the endocrocin intermediate. Emodin is then oxidized by several enzymes such as the Baeyer-Villiger oxidase GME11358, the oxidoreductase GME11367, the short chain dehydrogenase/reductase GME11373, as well as by other oxidoreductases from the cluster, to modify the A and C rings and open the B ring, and finally yield monodictyphenone. The prenyltransferase GME11375 may catalyze the addition reaction between the C5 side chains and the carbon bone of dibenzodioxocinones. The remaining biochemical reactions to the final product dibenzodioxocinones should be methylation catalyzed by methyltransferase GME11366 and reduction and lactonization reaction catalyzed by a series of oxidordeuctases. This Pestalotiopsis microspora protein is Putative monooxygenase GME11364.